A 352-amino-acid polypeptide reads, in one-letter code: MQSMPDSTRHPPLSYCKAGVDIEKAADLVEAIKPIAKRTRRPGVLSGIGGFGGLFELPRGYKQPVLVSGTDGVGTKLKLAVELNRHDTIGIDLVAMCVNDVITTGAEPLFFLDYYATGHLNNEQAKQILTGIGAGCELAEVALIGGETAEMPGLYRQKDYDLAGFCVGVVEKEKIIDGSRVRVGDALIGIASSGPHSNGYSLIRKILARAKIPLSQSFENKSLADGLLAPTRIYVKTIKRLFSEINVHALAHITGGGLIENVPRVLPSYTQAVIDSNGWEWPAIFHWLQKQGKVPIEEMWRTFNMGVGMVLCLDKKEVRKTLELLAALGETAWILGEIQSSSEEQPRVTITP.

It belongs to the AIR synthase family.

Its subcellular location is the cytoplasm. The enzyme catalyses 2-formamido-N(1)-(5-O-phospho-beta-D-ribosyl)acetamidine + ATP = 5-amino-1-(5-phospho-beta-D-ribosyl)imidazole + ADP + phosphate + H(+). Its pathway is purine metabolism; IMP biosynthesis via de novo pathway; 5-amino-1-(5-phospho-D-ribosyl)imidazole from N(2)-formyl-N(1)-(5-phospho-D-ribosyl)glycinamide: step 2/2. The polypeptide is Phosphoribosylformylglycinamidine cyclo-ligase (Coxiella burnetii (strain RSA 331 / Henzerling II)).